The primary structure comprises 240 residues: Sialidase 85-1.2 (240 aa).

Residues 127–142 (DDDDGGDDDDEEDSQE) are compositionally biased toward acidic residues. Disordered regions lie at residues 127-158 (DDDD…GKKP) and 221-240 (HRGG…QRDA). The segment covering 144 to 155 (SSPKESSPEKIG) has biased composition (basic and acidic residues).

Belongs to the glycosyl hydrolase 33 family.

The catalysed reaction is Hydrolysis of alpha-(2-&gt;3)-, alpha-(2-&gt;6)-, alpha-(2-&gt;8)- glycosidic linkages of terminal sialic acid residues in oligosaccharides, glycoproteins, glycolipids, colominic acid and synthetic substrates.. Developmentally regulated neuraminidase implicated in parasite invasion of cells. May contribute to the pathology during T.cruzi infection by cleaving sialic acid from cells of the immune system. The protein is Sialidase 85-1.2 (SA85-1.2) of Trypanosoma cruzi.